Consider the following 69-residue polypeptide: Large ribosomal subunit protein bL32c (69 aa).

Belongs to the bacterial ribosomal protein bL32 family.

It localises to the plastid. The protein resides in the chloroplast. The polypeptide is Large ribosomal subunit protein bL32c (rpl32) (Marchantia polymorpha (Common liverwort)).